The chain runs to 177 residues: Secretion monitor (177 aa).

Positions 1–37 (MIGILNRWRQFGRRYFWPHLLLGMVAASLGVPSNLSG) are cleaved as a signal peptide.

Belongs to the SecM family.

It localises to the cytoplasm. It is found in the cytosol. Its subcellular location is the periplasm. Regulates secA expression by translational coupling of the secM secA operon. Translational pausing at a specific Pro residue 5 residues before the end of the protein may allow disruption of a mRNA repressor helix that normally suppresses secA translation initiation. In Yersinia pseudotuberculosis serotype O:1b (strain IP 31758), this protein is Secretion monitor.